Consider the following 164-residue polypeptide: Cyclic pyranopterin monophosphate synthase (164 aa).

Substrate-binding positions include 75–77 (MCH) and 116–117 (ME). The active site involves Asp131.

Belongs to the MoaC family. In terms of assembly, homohexamer; trimer of dimers.

It carries out the reaction (8S)-3',8-cyclo-7,8-dihydroguanosine 5'-triphosphate = cyclic pyranopterin phosphate + diphosphate. It functions in the pathway cofactor biosynthesis; molybdopterin biosynthesis. Catalyzes the conversion of (8S)-3',8-cyclo-7,8-dihydroguanosine 5'-triphosphate to cyclic pyranopterin monophosphate (cPMP). This chain is Cyclic pyranopterin monophosphate synthase, found in Staphylococcus aureus (strain Mu3 / ATCC 700698).